A 1715-amino-acid polypeptide reads, in one-letter code: Protein PHYLLO, chloroplastic (1715 aa).

A chloroplast-targeting transit peptide spans 1-19 (MRSSFLVSNPPFLPSLIPR). The tract at residues 20-273 (YSSRKSIRRS…EKSIFQVSSH (254 aa)) is inactive isochorismate synthase. Residues 363–933 (NAVWASAIIE…GTKSELEDAL (571 aa)) form a 2-succinyl-5-enolpyruvyl-6-hydroxy-3-cyclohexene-1-carboxylate synthase region. Residues 429 to 449 (AVIITSSGTAVSNLLPAVVEA) traverse the membrane as a helical segment. The O-succinylbenzoate synthase stretch occupies residues 981–1364 (FLHPMIKNVL…SEDVMMNTLG (384 aa)). The active-site Proton donor; for the o-succinylbenzoate synthase activity is Lys1170. Mg(2+) is bound by residues Asp1202, Glu1228, and Asp1251. Lys1279 (proton acceptor; for the o-succinylbenzoate synthase activity) is an active-site residue. A 2-succinyl-6-hydroxy-2,4-cyclohexadiene-1-carboxylate synthase region spans residues 1418–1715 (HFIRVHDVGE…QKLLLALKEM (298 aa)). The region spanning 1435–1540 (LFLHGFLGTG…EGAVVVSGSP (106 aa)) is the AB hydrolase-1 domain.

In the N-terminal section; belongs to the isochorismate synthase family. It in the 2nd section; belongs to the TPP enzyme family. MenD subfamily. The protein in the 3rd section; belongs to the mandelate racemase/muconate lactonizing enzyme family. MenC type 1 subfamily. This sequence in the C-terminal section; belongs to the AB hydrolase superfamily. MenH family. Mg(2+) is required as a cofactor. Requires Mn(2+) as cofactor. It depends on thiamine diphosphate as a cofactor.

Its subcellular location is the plastid. The protein localises to the chloroplast membrane. The enzyme catalyses isochorismate + 2-oxoglutarate + H(+) = 5-enolpyruvoyl-6-hydroxy-2-succinyl-cyclohex-3-ene-1-carboxylate + CO2. It carries out the reaction (1R,6R)-6-hydroxy-2-succinyl-cyclohexa-2,4-diene-1-carboxylate = 2-succinylbenzoate + H2O. It catalyses the reaction 5-enolpyruvoyl-6-hydroxy-2-succinyl-cyclohex-3-ene-1-carboxylate = (1R,6R)-6-hydroxy-2-succinyl-cyclohexa-2,4-diene-1-carboxylate + pyruvate. Its function is as follows. Multifunctional enzyme required for phylloquinone (vitamin K1) biosynthesis. The protein is Protein PHYLLO, chloroplastic (PHYLLO) of Arabidopsis thaliana (Mouse-ear cress).